Here is a 251-residue protein sequence, read N- to C-terminus: Transmembrane ascorbate-dependent reductase CYB561 (251 aa).

Residue methionine 1 is modified to N-acetylmethionine. Residues 1–16 (MEGGAAASTPAALPYY) lie on the Cytoplasmic side of the membrane. A helical transmembrane segment spans residues 17-37 (VAFSQLLGLTLVAMTGAWLGL). A Cytochrome b561 domain is found at 19 to 220 (FSQLLGLTLV…FGGAVLYILT (202 aa)). At 38 to 51 (YRGGIAWESDLQFN) the chain is on the vesicular side. A helical membrane pass occupies residues 52 to 72 (AHPLCMVIGLIFLQGDALLVY). Histidine 53, arginine 73, and lysine 80 together coordinate heme b. Topologically, residues 73–85 (RVFRNEAKRTTKV) are cytoplasmic. L-ascorbate contacts are provided by lysine 80 and lysine 84. The helical transmembrane segment at 86 to 106 (LHGLLHIFALVIALVGLVAVF) threads the bilayer. Heme b is bound by residues histidine 87, 116-119 (DLYS), and histidine 121. Over 107-124 (DYHRKEGYADLYSLHSWC) the chain is Vesicular. A helical transmembrane segment spans residues 125–145 (GILVFVLYFVQWLVGFSFFLF). Residues 146 to 158 (PGASFSLRSRYRP) lie on the Cytoplasmic side of the membrane. Position 153 (arginine 153) interacts with L-ascorbate. A helical membrane pass occupies residues 159–179 (QHIFFGATIFLLSVGTALLGL). Residues histidine 160 and glutamate 181 each coordinate heme b. At 180–198 (KEALLFKLRDKYSAFEPEG) the chain is on the vesicular side. A helical transmembrane segment spans residues 199–219 (VLANVLGLLLACFGGAVLYIL). The Cytoplasmic segment spans residues 220–251 (TRADWKRPSQAEEQALSMDFKTLTEGDSPGSQ). Lysine 225 contacts heme b. Position 247 is a phosphoserine (serine 247).

Requires heme b as cofactor.

The protein resides in the cytoplasmic vesicle. It localises to the secretory vesicle. It is found in the chromaffin granule membrane. The enzyme catalyses monodehydro-L-ascorbate radical(out) + L-ascorbate(in) = monodehydro-L-ascorbate radical(in) + L-ascorbate(out). Its function is as follows. Transmembrane reductase that uses ascorbate as an electron donor in the cytoplasm and transfers electrons across membranes to reduce monodehydro-L-ascorbate radical in the lumen of secretory vesicles. It is therefore involved the regeneration and homeostasis within secretory vesicles of ascorbate which in turn provides reducing equivalents needed to support the activity of intravesicular enzymes. The chain is Transmembrane ascorbate-dependent reductase CYB561 (CYB561) from Pongo abelii (Sumatran orangutan).